A 294-amino-acid chain; its full sequence is Elongation factor Ts (294 aa).

The involved in Mg(2+) ion dislocation from EF-Tu stretch occupies residues 79-82; sequence TDFV.

It belongs to the EF-Ts family.

Its subcellular location is the cytoplasm. Associates with the EF-Tu.GDP complex and induces the exchange of GDP to GTP. It remains bound to the aminoacyl-tRNA.EF-Tu.GTP complex up to the GTP hydrolysis stage on the ribosome. The protein is Elongation factor Ts of Geobacillus sp. (strain WCH70).